The chain runs to 179 residues: uncharacterized protein (179 aa).

The protein localises to the plastid. Its subcellular location is the cyanelle. This is an uncharacterized protein from Cyanophora paradoxa.